The chain runs to 253 residues: 5-oxoprolinase subunit A (253 aa).

Belongs to the LamB/PxpA family. In terms of assembly, forms a complex composed of PxpA, PxpB and PxpC.

The catalysed reaction is 5-oxo-L-proline + ATP + 2 H2O = L-glutamate + ADP + phosphate + H(+). Functionally, catalyzes the cleavage of 5-oxoproline to form L-glutamate coupled to the hydrolysis of ATP to ADP and inorganic phosphate. This chain is 5-oxoprolinase subunit A, found in Bacillus cereus (strain ATCC 14579 / DSM 31 / CCUG 7414 / JCM 2152 / NBRC 15305 / NCIMB 9373 / NCTC 2599 / NRRL B-3711).